The chain runs to 33 residues: Mu-theraphotoxin-Os1a (33 aa).

3 cysteine pairs are disulfide-bonded: C2/C17, C9/C22, and C16/C29. L33 is subject to Leucine amide.

The protein belongs to the neurotoxin 10 (Hwtx-1) family. 14 (Hntx-1) subfamily. Monomer. In terms of tissue distribution, expressed by the venom gland.

Its subcellular location is the secreted. Its function is as follows. Potently and reversibly inhibits some human voltage-gated sodium channels (Nav1.1/SCN1A (IC(50)=72.0 nM), Nav1.2/SCN2A (IC(50)=75.5 nM), Nav1.6/SCN8A (IC(50)=115.0 nM), Nav1.7/SCN9A (IC(50)=52.7-129.5 nM), Nav1.3/SCN3A (IC(50)=306.6 nM)). The hNav1.7/SCN9A channel inhibition occurs without any change in steady-state inactivation- and conductance-voltage relationships. On adult mouse DRG neurons, this toxin is approximately 1000-fold more efficient to inhibit tetrodotoxin (TTX)-sensitive than TTX-resistant sodium currents. In vivo, this toxin exhibits analgesic effects in mice pain models. The protein is Mu-theraphotoxin-Os1a of Omothymus schioedtei (Malaysian earth tiger tarantula).